Consider the following 530-residue polypeptide: Autoinducer-2 kinase (530 aa).

It belongs to the FGGY kinase family.

It is found in the cytoplasm. It catalyses the reaction (S)-4,5-dihydroxypentane-2,3-dione + ATP = (2S)-2-hydroxy-3,4-dioxopentyl phosphate + ADP + H(+). Its function is as follows. Catalyzes the phosphorylation of autoinducer-2 (AI-2) to phospho-AI-2, which subsequently inactivates the transcriptional regulator LsrR and leads to the transcription of the lsr operon. Phosphorylates the ring-open form of (S)-4,5-dihydroxypentane-2,3-dione (DPD), which is the precursor to all AI-2 signaling molecules, at the C5 position. The polypeptide is Autoinducer-2 kinase (Escherichia coli (strain SMS-3-5 / SECEC)).